The following is a 78-amino-acid chain: MSDIAERVKKIVVEHLGVEPEKVTEASNFIDDLGADSLDTVELVMAFEEEFNVEIPDDAAETIQTVGDAIKFLEKNSA.

The Carrier domain maps to 2 to 77; the sequence is SDIAERVKKI…DAIKFLEKNS (76 aa). Ser37 bears the O-(pantetheine 4'-phosphoryl)serine mark.

The protein belongs to the acyl carrier protein (ACP) family. Post-translationally, 4'-phosphopantetheine is transferred from CoA to a specific serine of apo-ACP by AcpS. This modification is essential for activity because fatty acids are bound in thioester linkage to the sulfhydryl of the prosthetic group.

It localises to the cytoplasm. The protein operates within lipid metabolism; fatty acid biosynthesis. Functionally, carrier of the growing fatty acid chain in fatty acid biosynthesis. The sequence is that of Acyl carrier protein from Methylorubrum extorquens (strain CM4 / NCIMB 13688) (Methylobacterium extorquens).